The sequence spans 275 residues: MAIVKVKPTSPGRRAMVKVVNKDLHKGKPFAPLLDSQSTTAGRNNNGHITTRHKGGGHKHHYRVVDFRRNKDGIAAKVERLEYDPNRSANIALVLYADGERRYIIAPKGVTVGQQLMSGSEAPIRAGNTLPIRNIPVGTTIHCIEMLPGKGAQMARSAGTSAMLLAREGIYAQVRLRSGEIRRVHVECRATIGEVGNEEHSLRQIGKAGANRWRGIRPTVRGVAMNPVDHPHGGGEGKTAAGRDPVSPWGTPTKGYRTRSNKRTTSMIVQRRHKR.

Disordered stretches follow at residues 28-59 (KPFA…GGHK) and 224-275 (AMNP…RHKR). Over residues 35-49 (DSQSTTAGRNNNGHI) the composition is skewed to polar residues. The segment covering 50–59 (TTRHKGGGHK) has biased composition (basic residues).

The protein belongs to the universal ribosomal protein uL2 family. In terms of assembly, part of the 50S ribosomal subunit. Forms a bridge to the 30S subunit in the 70S ribosome.

Its function is as follows. One of the primary rRNA binding proteins. Required for association of the 30S and 50S subunits to form the 70S ribosome, for tRNA binding and peptide bond formation. It has been suggested to have peptidyltransferase activity; this is somewhat controversial. Makes several contacts with the 16S rRNA in the 70S ribosome. The polypeptide is Large ribosomal subunit protein uL2 (Paraburkholderia xenovorans (strain LB400)).